Reading from the N-terminus, the 697-residue chain is uncharacterized protein (697 aa).

The next 14 helical transmembrane spans lie at proline 65–tyrosine 85, cysteine 106–phenylalanine 126, tyrosine 131–isoleucine 151, aspartate 163–glutamate 183, leucine 194–glycine 214, threonine 227–isoleucine 247, serine 286–aspartate 306, proline 316–glutamate 336, serine 361–valine 381, methionine 394–glutamate 414, glutamate 419–histidine 439, serine 450–isoleucine 470, glutamine 487–tryptophan 507, and threonine 558–glutamine 578. The interval serine 246–asparagine 321 is disordered. Residues threonine 251 to serine 298 are compositionally biased toward low complexity. The segment covering alanine 299–asparagine 321 has biased composition (basic and acidic residues).

It is found in the membrane. This is an uncharacterized protein from Saccharomyces cerevisiae (strain ATCC 204508 / S288c) (Baker's yeast).